A 363-amino-acid polypeptide reads, in one-letter code: MIIDTTEIETINSFSKLESLKEVYGIIWMLFPIFTLVLGITIGVLVIVWLEREISAGIQQRIGPEYAGPLGILQALADGTKLLLKENLIPSTGDTRLFSIGPSIAVISIFLSYSVIPFGDHLVLADLSIGVFFWIAISSIAPVGLLMSGYGSNNKYSFLGGLRAAAQSISYEIPLALCVLSISLLSNSSSTVDIVEAQSKYGFWGWNLWRQPIGFIVFLISSLAECERLPFDLPEAEEELVAGYQTEYSGIKFGLFYIASYLNLLVSSLFVTVLYLGGWNLSIPYIFVPELFGINKKGKVFGTLIGIFITLAKTYLFLFIPIATRWTLPRLRMDQLLNLGWKFLLPISLGNLLLTTSSQLLSL.

The next 8 membrane-spanning stretches (helical) occupy residues 30–50 (LFPI…IVWL), 98–118 (FSIG…VIPF), 127–147 (LSIG…GLLM), 165–185 (AAQS…ISLL), 203–223 (FWGW…ISSL), 248–268 (YSGI…LVSS), 300–320 (VFGT…FLFI), and 336–356 (LLNL…LLTT).

The protein belongs to the complex I subunit 1 family. In terms of assembly, NDH is composed of at least 16 different subunits, 5 of which are encoded in the nucleus.

The protein localises to the plastid. Its subcellular location is the chloroplast thylakoid membrane. The catalysed reaction is a plastoquinone + NADH + (n+1) H(+)(in) = a plastoquinol + NAD(+) + n H(+)(out). It carries out the reaction a plastoquinone + NADPH + (n+1) H(+)(in) = a plastoquinol + NADP(+) + n H(+)(out). In terms of biological role, NDH shuttles electrons from NAD(P)H:plastoquinone, via FMN and iron-sulfur (Fe-S) centers, to quinones in the photosynthetic chain and possibly in a chloroplast respiratory chain. The immediate electron acceptor for the enzyme in this species is believed to be plastoquinone. Couples the redox reaction to proton translocation, and thus conserves the redox energy in a proton gradient. The polypeptide is NAD(P)H-quinone oxidoreductase subunit 1, chloroplastic (Nicotiana tomentosiformis (Tobacco)).